We begin with the raw amino-acid sequence, 506 residues long: Putative basic amino acid antiporter YfcC (506 aa).

The next 13 helical transmembrane spans lie at 19–39 (LVII…VPVG), 107–127 (GTAV…GIVM), 148–168 (ILFI…FGMG), 171–191 (AVAF…DSIT), 208–228 (WMNP…VLSG), 231–251 (LRIV…MVYA), 287–307 (WLVL…VIVN), 310–330 (FIPE…IIGV), 352–372 (MMIA…LVGN), 398–418 (AVAA…VTSG), 419–439 (SGQA…VGVN), 442–462 (VTVL…PTSA), and 485–505 (LLGL…LMGY).

This sequence to H.influenzae HI_0594. It to B.subtilis YcgA.

The protein localises to the cell inner membrane. Metabolomic profiling of different yfcC over-expression and deletion strains suggests that it may affect the glyoxylate shunt. The chain is Putative basic amino acid antiporter YfcC (yfcC) from Escherichia coli (strain K12).